A 294-amino-acid polypeptide reads, in one-letter code: Segregation and condensation protein A (294 aa).

The protein belongs to the ScpA family. Component of a cohesin-like complex composed of ScpA, ScpB and the Smc homodimer, in which ScpA and ScpB bind to the head domain of Smc. The presence of the three proteins is required for the association of the complex with DNA.

The protein resides in the cytoplasm. Participates in chromosomal partition during cell division. May act via the formation of a condensin-like complex containing Smc and ScpB that pull DNA away from mid-cell into both cell halves. This Ureaplasma parvum serovar 3 (strain ATCC 700970) protein is Segregation and condensation protein A.